We begin with the raw amino-acid sequence, 437 residues long: Adenosylhomocysteinase (437 aa).

Residues threonine 58, aspartate 133, and glutamate 158 each contribute to the substrate site. 159 to 161 (TTT) lines the NAD(+) pocket. Lysine 188 and aspartate 192 together coordinate substrate. NAD(+)-binding positions include asparagine 193, 224–229 (GDVGKG), glutamate 245, 301–303 (VGH), and asparagine 348.

Belongs to the adenosylhomocysteinase family. Homotetramer. NAD(+) serves as cofactor.

It carries out the reaction S-adenosyl-L-homocysteine + H2O = L-homocysteine + adenosine. It participates in amino-acid biosynthesis; L-homocysteine biosynthesis; L-homocysteine from S-adenosyl-L-homocysteine: step 1/1. Its function is as follows. Adenosylhomocysteine is a competitive inhibitor of S-adenosyl-L-methionine-dependent methyl transferase reactions; therefore adenosylhomocysteinase may play a key role in the control of methylations via regulation of the intracellular concentration of adenosylhomocysteine. The sequence is that of Adenosylhomocysteinase (ahcy-1) from Caenorhabditis elegans.